Consider the following 67-residue polypeptide: Large ribosomal subunit protein uL29 (67 aa).

Belongs to the universal ribosomal protein uL29 family. Part of the 50S ribosomal subunit. Contacts protein L23 and trigger factor when it is complexed with the ribosome.

In terms of biological role, binds the 23S rRNA. One of the proteins that surrounds the polypeptide exit tunnel on the outside of the subunit. This chain is Large ribosomal subunit protein uL29 (rpmC), found in Deinococcus radiodurans (strain ATCC 13939 / DSM 20539 / JCM 16871 / CCUG 27074 / LMG 4051 / NBRC 15346 / NCIMB 9279 / VKM B-1422 / R1).